A 58-amino-acid chain; its full sequence is Large ribosomal subunit protein bL32 (58 aa).

Belongs to the bacterial ribosomal protein bL32 family.

This is Large ribosomal subunit protein bL32 from Carboxydothermus hydrogenoformans (strain ATCC BAA-161 / DSM 6008 / Z-2901).